Reading from the N-terminus, the 234-residue chain is Adenosine 5'-phosphosulfate reductase (234 aa).

[4Fe-4S] cluster is bound by residues Cys-120, Cys-121, Cys-203, and Cys-206. Catalysis depends on Cys-229, which acts as the Nucleophile; cysteine thiosulfonate intermediate.

This sequence belongs to the PAPS reductase family. CysH subfamily. The cofactor is [4Fe-4S] cluster.

Its subcellular location is the cytoplasm. The enzyme catalyses [thioredoxin]-disulfide + sulfite + AMP + 2 H(+) = adenosine 5'-phosphosulfate + [thioredoxin]-dithiol. The protein operates within sulfur metabolism; hydrogen sulfide biosynthesis; sulfite from sulfate. In terms of biological role, catalyzes the formation of sulfite from adenosine 5'-phosphosulfate (APS) using thioredoxin as an electron donor. This chain is Adenosine 5'-phosphosulfate reductase, found in Bacillus thuringiensis subsp. konkukian (strain 97-27).